The primary structure comprises 548 residues: Protein GPR108 (548 aa).

The first 32 residues, 1 to 32, serve as a signal peptide directing secretion; the sequence is MAVSERRGLGRGSPAEWGPWLLLLLLLGGSSG. Residues Asn57, Asn63, and Asn109 are each glycosylated (N-linked (GlcNAc...) asparagine). Residues 165 to 190 form a disordered region; that stretch reads DHAGTTAAPDKAKSKPTGLQGDRQGV. Residues Asn205 and Asn209 are each glycosylated (N-linked (GlcNAc...) asparagine). The next 7 membrane-spanning stretches (helical) occupy residues 268 to 288, 297 to 317, 341 to 361, 372 to 392, 406 to 426, 454 to 474, and 478 to 498; these read LYMV…SILC, IHWL…FHSI, LLKG…WAFV, IFGI…VMES, ILFL…VWSI, VMVI…RAVV, and WQWL…VLTG. An N-linked (GlcNAc...) asparagine glycan is attached at Asn539.

It belongs to the LU7TM family.

The protein resides in the golgi apparatus. It is found in the cis-Golgi network membrane. The protein localises to the trans-Golgi network membrane. It localises to the golgi apparatus membrane. Its function is as follows. May play a role in intracellular immune modulation by activating NF-kappaB response and attenuating Toll-like-receptor response. The chain is Protein GPR108 (GPR108) from Bos taurus (Bovine).